A 442-amino-acid polypeptide reads, in one-letter code: Lipoyl synthase, apicoplast (442 aa).

Positions Met1–Gly23 are cleaved as a signal peptide. Residues Leu104–Pro154 form a disordered region. Over residues Lys114–Pro135 the composition is skewed to basic and acidic residues. The [4Fe-4S] cluster site is built by Cys177, Cys182, Cys188, Cys203, Cys207, Cys210, and Ser418. Residues Trp189 to Lys407 enclose the Radical SAM core domain.

The protein belongs to the radical SAM superfamily. Lipoyl synthase family. [4Fe-4S] cluster is required as a cofactor.

The protein resides in the plastid. Its subcellular location is the apicoplast. The enzyme catalyses [[Fe-S] cluster scaffold protein carrying a second [4Fe-4S](2+) cluster] + N(6)-octanoyl-L-lysyl-[protein] + 2 oxidized [2Fe-2S]-[ferredoxin] + 2 S-adenosyl-L-methionine + 4 H(+) = [[Fe-S] cluster scaffold protein] + N(6)-[(R)-dihydrolipoyl]-L-lysyl-[protein] + 4 Fe(3+) + 2 hydrogen sulfide + 2 5'-deoxyadenosine + 2 L-methionine + 2 reduced [2Fe-2S]-[ferredoxin]. It functions in the pathway protein modification; protein lipoylation via endogenous pathway; protein N(6)-(lipoyl)lysine from octanoyl-[acyl-carrier-protein]: step 2/2. Catalyzes the radical-mediated insertion of two sulfur atoms into the C-6 and C-8 positions of the octanoyl moiety bound to the lipoyl domains of lipoate-dependent enzymes, thereby converting the octanoylated domains into lipoylated derivatives. The polypeptide is Lipoyl synthase, apicoplast (Plasmodium knowlesi (strain H)).